The primary structure comprises 537 residues: uncharacterized protein (537 aa).

It belongs to the RuBisCO large chain family. Type IV subfamily.

In terms of biological role, unknown. Probably does not have RuBisCO activity. This is an uncharacterized protein from Symbiodinium sp. (Dinoflagellate).